Reading from the N-terminus, the 906-residue chain is MLSILKKLFGTANDRTVKKLFSEITKINSFEPAIKILSDAALKNKTVEFKEKLKNGATLDDILYEAFAVVREAASRVCGMRHFDVQLIGGIILHRGMIAEMRTGEGKTLVATLPAYLNALTEKGVHVVTVNDYLALRDSASMGKIYNFLGLSVGCIVAGMTDEAKRIAYNSDITHATNNELGFDYLRDNMKYSMQERVLRPFNFAIIDEVDSILIDEARTPIVISGPVNDNSALYGKIDKIVRLLNVSDFEKDEKLKTINLTEAGITHIESLLIKDGIIKPDTGLYDFENLNLVHYVNQALRAHHMFTIDVDYLVREGKVMIIDEFTGRVMEGRRYSEGLHQALEAKENVKIQNENQTLASITFQNYFRNYPKLAGMTGTSMTEASELKDIYNLDVVAVPTHNKVTRIDLDDEIYGSKQEKYDAILKLIKDCYNRGQPILVGTISIEKSEELSSILNKEKIPHKVLNAKFHEQEAFIIAQAGRFKAVTIATNMAGRGTDIMLGGNPEMLIEQFNKDHNYVAKTAEIKAQIAEEKQKVIETGGLFVIGTERHESRRIDNQLRGRSGRQGDPGKTQFFLSLDDDLMRIFASDRISGVLRTLGLKDGEAIHHPMISRSLEKAQQKVEEYNYEMRKNLLRFDDVMNDQRKIIYEQRTEIIKSKDSYGFLTSATEELAKKIVLTFIPVGSYREDWDIENLTVELHRIFSIKFDHNLVNKNDVTEEDITKLVIQMAHDIYKSKEEAYSSELMHNAVKYILLTTLDQVWKDHLYSLDHLRQGISLRAYAQKDPLSEYKREAFNLFEQMLNNLKELFIQTVYHFHIDLKHLQKEDISLEHKKLQKNMRESREDPAFSKYNAGNSIETYLKPVVSRVDPKDRKPDDPMSWGRVSRNELCPCGSGKKYKYCHGVNE.

ATP-binding positions include Gln86, 104–108 (GEGKT), and Asp499. Positions 890, 892, 901, and 902 each coordinate Zn(2+).

Belongs to the SecA family. Monomer and homodimer. Part of the essential Sec protein translocation apparatus which comprises SecA, SecYEG and auxiliary proteins SecDF-YajC and YidC. It depends on Zn(2+) as a cofactor.

Its subcellular location is the cell inner membrane. The protein localises to the cytoplasm. It carries out the reaction ATP + H2O + cellular proteinSide 1 = ADP + phosphate + cellular proteinSide 2.. Functionally, part of the Sec protein translocase complex. Interacts with the SecYEG preprotein conducting channel. Has a central role in coupling the hydrolysis of ATP to the transfer of proteins into and across the cell membrane, serving both as a receptor for the preprotein-SecB complex and as an ATP-driven molecular motor driving the stepwise translocation of polypeptide chains across the membrane. The protein is Protein translocase subunit SecA of Rickettsia prowazekii (strain Madrid E).